Consider the following 559-residue polypeptide: Frizzled-5 (559 aa).

The N-terminal stretch at 1–26 (MGSFRSGVFALSFVVLLLDYFAPAQA) is a signal peptide. Over 27 to 220 (ASKAIVCQEI…QPYFTQDEKM (194 aa)) the chain is Extracellular. Residues 28-149 (SKAIVCQEIT…GDPDTLCMYY (122 aa)) form the FZ domain. Disulfide bonds link C33-C94, C41-C87, C78-C116, C105-C146, and C109-C133. N47 carries N-linked (GlcNAc...) asparagine glycosylation. A glycan (N-linked (GlcNAc...) asparagine) is linked at N150. A helical transmembrane segment spans residues 221–241 (FVTFWIGLWSILCFISTFTTV). Residues 242-257 (ATFLIDMERFRYPERP) lie on the Cytoplasmic side of the membrane. The chain crosses the membrane as a helical span at residues 258–278 (IIFLSACYLFVSIGYVVRLIV). Residues 279 to 301 (GHENVACNKDHIHYETTGPALCT) are Extracellular-facing. Residues 302–322 (IVFLLIYFFGMASSIWWVILT) form a helical membrane-spanning segment. The Cytoplasmic segment spans residues 323-343 (FTWFLAAGMKWGNEAIASYSQ). The helical transmembrane segment at 344 to 364 (YFHMAAWLIPSVKSIAVLALS) threads the bilayer. Residues 365–387 (SVDGDPVAGICYVGNQNLDNLRG) are Extracellular-facing. Residues 388–408 (FVLAPLVVYLFSGTMFLLAGF) traverse the membrane as a helical segment. Residues 409-434 (VSLFRIRSVIKQGGTKTDKLEKLMIR) are Cytoplasmic-facing. Residues 435–455 (IGIFSVLYTVPATIVVACYIY) traverse the membrane as a helical segment. Residues 456–483 (EQHYREHWEKTHNCSCPGDKQRYRPDYA) are Extracellular-facing. N-linked (GlcNAc...) asparagine glycosylation occurs at N468. The chain crosses the membrane as a helical span at residues 484-504 (VFMLKYLMCLVVGITSGVWIW). Topologically, residues 505–559 (SGKTLESWKRFTGRCCRNSKPINASAYSEASRALTPRTGLSNLTLPHKQVPLSHV) are cytoplasmic. The Lys-Thr-X-X-X-Trp motif, mediates interaction with the PDZ domain of Dvl family members motif lies at 507-512 (KTLESW). Positions 557 to 559 (SHV) match the PDZ-binding motif.

The protein belongs to the G-protein coupled receptor Fz/Smo family. In terms of tissue distribution, expressed in retina.

It localises to the cell membrane. Its subcellular location is the golgi apparatus membrane. Receptor for Wnt proteins that functions in the canonical Wnt/beta-catenin signaling pathway. The canonical Wnt/beta-catenin signaling pathway leads to the activation of disheveled proteins, inhibition of GSK-3 kinase, nuclear accumulation of beta-catenin and activation of Wnt target genes. A second signaling pathway involving PKC and calcium fluxes has been seen for some family members, but it is not yet clear if it represents a distinct pathway or if it can be integrated in the canonical pathway, as PKC seems to be required for Wnt-mediated inactivation of GSK-3 kinase. Both pathways seem to involve interactions with G-proteins. May be involved in transduction and intercellular transmission of polarity information during tissue morphogenesis and/or in differentiated tissues. The sequence is that of Frizzled-5 (fzd5) from Xenopus laevis (African clawed frog).